A 261-amino-acid chain; its full sequence is Immediate-early protein IE-0 (261 aa).

Residues 212 to 257 (CNVCKEISTDERFLKPKECCEYAICNACCVNMWKTATTHAKCPACR) form an RING-type zinc finger.

As to quaternary structure, interacts with proteins C42 and FP25. Interacts with host beta-tubulin. Interacts with Ac66 and vUb.

It localises to the host nucleus. The protein resides in the host cytoplasm. It is found in the virion. Functionally, putative viral E3 ligase that plays an essential regulatory role in both viral DNA replication and transcriptional transactivation. The role in transcription has been shown to include activation of gene expression from early viral promoters. Also promotes the efficient egress of nucleocapsids from the host nucleus. May act as an E3 ligase that promotes ubiquitination of nucleocapsids proteins by vUbi and subsequent viral egress for the host nucleus. The protein is Immediate-early protein IE-0 (IE0) of Lepidoptera (butterflies and moths).